A 445-amino-acid chain; its full sequence is Probable glycine dehydrogenase (decarboxylating) subunit 1 (445 aa).

It belongs to the GcvP family. N-terminal subunit subfamily. The glycine cleavage system is composed of four proteins: P, T, L and H. In this organism, the P 'protein' is a heterodimer of two subunits.

It carries out the reaction N(6)-[(R)-lipoyl]-L-lysyl-[glycine-cleavage complex H protein] + glycine + H(+) = N(6)-[(R)-S(8)-aminomethyldihydrolipoyl]-L-lysyl-[glycine-cleavage complex H protein] + CO2. Its function is as follows. The glycine cleavage system catalyzes the degradation of glycine. The P protein binds the alpha-amino group of glycine through its pyridoxal phosphate cofactor; CO(2) is released and the remaining methylamine moiety is then transferred to the lipoamide cofactor of the H protein. The protein is Probable glycine dehydrogenase (decarboxylating) subunit 1 of Chlorobium chlorochromatii (strain CaD3).